The following is a 1824-amino-acid chain: Afadin (1824 aa).

One can recognise a Ras-associating 1 domain in the interval 39-133; the sequence is FHGVMRFYFQ…GRFVLKNEND (95 aa). Residues 128-194 are disordered; it reads LKNENDAIPP…DRPFQGEDVE (67 aa). Residues 146–185 adopt a coiled-coil conformation; the sequence is EKQEKEGVIQNFKRTLSKKEKKEKKKREKEALRQASDKDD. Residues 160–172 show a composition bias toward basic residues; sequence TLSKKEKKEKKKR. Residues 173-189 show a composition bias toward basic and acidic residues; sequence EKEALRQASDKDDRPFQ. Phosphoserine is present on residues Ser-216, Ser-246, and Ser-256. The Ras-associating 2 domain maps to 246–348; sequence SGGTLRIYAD…LVFQLKRRPP (103 aa). Positions 349-371 are enriched in basic and acidic residues; sequence DHIPKKTKKHLEGKTPKGKERAD. The segment at 349-378 is disordered; that stretch reads DHIPKKTKKHLEGKTPKGKERADGSGYGST. A phosphoserine mark is found at Ser-391 and Ser-424. The 67-residue stretch at 426-492 folds into the FHA domain; the sequence is TEVGTEKLDD…LQSGMKVQFG (67 aa). A phosphoserine mark is found at Ser-512, Ser-557, Ser-562, Ser-589, and Ser-655. Residues 534 to 595 form a disordered region; sequence FDLGGDIHSG…RQESRTQDAS (62 aa). The span at 580 to 591 shows a compositional bias: basic and acidic residues; that stretch reads QQPDYRRQESRT. In terms of domain architecture, Dilute spans 668–908; the sequence is NKMVSMMEGV…IENVVTVAEN (241 aa). A PDZ domain is found at 1007–1093; the sequence is IITVTLKKQN…VVTLEVAKQG (87 aa). 9 positions are modified to phosphoserine: Ser-1083, Ser-1107, Ser-1126, Ser-1140, Ser-1143, Ser-1172, Ser-1173, Ser-1182, and Ser-1199. A disordered region spans residues 1107 to 1223; that stretch reads SPMMQRISDR…PRPEAYPIPT (117 aa). The segment covering 1113-1128 has biased composition (basic and acidic residues); the sequence is ISDRRGSGKPRPKSEG. Polar residues predominate over residues 1132–1143; it reads YNNSTQNGSPES. A compositionally biased stretch (basic and acidic residues) spans 1152–1172; it reads SEPKKLPGDDRLMKNRADHRS. A compositionally biased stretch (polar residues) spans 1190-1210; the sequence is ASGTTAKITSVSTGNLCTEEQ. Residues Thr-1211 and Thr-1232 each carry the phosphothreonine modification. Disordered stretches follow at residues 1235 to 1473, 1501 to 1528, and 1569 to 1824; these read ASKS…LQRP, SKEE…EKQQ, and RLQE…LNTK. At Ser-1238 the chain carries Phosphoserine. Composition is skewed to basic and acidic residues over residues 1252-1262 and 1274-1302; these read YEEKPHMHTDS and RSQE…KSDS. Ser-1275 carries the phosphoserine modification. A compositionally biased stretch (low complexity) spans 1309–1318; it reads SSSLDSSTSS. A compositionally biased stretch (polar residues) spans 1325–1337; it reads SSKSVTPASTLTK. Ser-1328 is subject to Phosphoserine. Residue Thr-1330 is modified to Phosphothreonine. The span at 1345 to 1356 shows a compositional bias: low complexity; it reads TPAAIPATPVAV. Over residues 1364 to 1373 the composition is skewed to pro residues; it reads LPPPPPPPPV. Basic and acidic residues predominate over residues 1407–1441; it reads AERRKREEHQRWYEKEKARLEEERERKRREQERKL. Residues 1408-1448 are a coiled coil; that stretch reads ERRKREEHQRWYEKEKARLEEERERKRREQERKLGQMRTQS. Residues Ser-1501 and Ser-1512 each carry the phosphoserine modification. The segment covering 1515–1528 has biased composition (basic and acidic residues); the sequence is PWKRDAKEKLEKQQ. Residues 1523–1667 adopt a coiled-coil conformation; it reads KLEKQQQMHI…SRLEAERRRQ (145 aa). Residues 1578-1589 are compositionally biased toward acidic residues; that stretch reads EDDEEEEDDDVD. Basic and acidic residues predominate over residues 1597-1677; the sequence is LEAERRARLQ…HDEAARRLLE (81 aa). Over residues 1694 to 1709 the composition is skewed to pro residues; it reads PPSPSPAPGAPPPPPQ. Ser-1696, Ser-1721, Ser-1774, Ser-1779, and Ser-1799 each carry phosphoserine. The span at 1762–1776 shows a compositional bias: basic and acidic residues; the sequence is DACRDAKEKRSKSQD. Lys-1807 is modified (N6-acetyllysine). Residues 1813–1824 are compositionally biased toward basic and acidic residues; sequence KLTELENELNTK.

Homodimer. Interacts with F-actin, nectin and NECTIN3. Essential for the association of nectin and E-cadherin. Isoform 1/s-afadin does not interact with F-actin. Interacts with ZO-1 and occludin, but probably in an indirect manner. Interacts with RIT1 and RIT2. Interacts with NRXN1 and BCR. Interacts with ADAM10; the interaction locks ADAM10 at adherens junctions following ADAM10 recruitment to adherens junctions by TSPAN33.

It localises to the cell junction. The protein resides in the adherens junction. In terms of biological role, belongs to an adhesion system, probably together with the E-cadherin-catenin system, which plays a role in the organization of homotypic, interneuronal and heterotypic cell-cell adherens junctions (AJs). Nectin- and actin-filament-binding protein that connects nectin to the actin cytoskeleton. May play a key role in the organization of epithelial structures of the embryonic ectoderm. Essential for the organization of adherens junctions. In Homo sapiens (Human), this protein is Afadin.